The chain runs to 348 residues: sn-glycerol-3-phosphate import ATP-binding protein UgpC (348 aa).

Positions isoleucine 4 to isoleucine 235 constitute an ABC transporter domain. Glycine 37 to serine 44 provides a ligand contact to ATP.

The protein belongs to the ABC transporter superfamily. sn-glycerol-3-phosphate importer (TC 3.A.1.1.3) family. As to quaternary structure, the complex is composed of two ATP-binding proteins (UgpC), two transmembrane proteins (UgpA and UgpE) and a solute-binding protein (UgpB).

It is found in the cell inner membrane. The enzyme catalyses sn-glycerol 3-phosphate(out) + ATP + H2O = sn-glycerol 3-phosphate(in) + ADP + phosphate + H(+). In terms of biological role, part of the ABC transporter complex UgpBAEC involved in sn-glycerol-3-phosphate (G3P) import. Responsible for energy coupling to the transport system. The sequence is that of sn-glycerol-3-phosphate import ATP-binding protein UgpC from Bartonella quintana (strain Toulouse) (Rochalimaea quintana).